Consider the following 269-residue polypeptide: 2-dehydro-3-deoxyphosphooctonate aldolase (269 aa).

This sequence belongs to the KdsA family.

It localises to the cytoplasm. The catalysed reaction is D-arabinose 5-phosphate + phosphoenolpyruvate + H2O = 3-deoxy-alpha-D-manno-2-octulosonate-8-phosphate + phosphate. It functions in the pathway carbohydrate biosynthesis; 3-deoxy-D-manno-octulosonate biosynthesis; 3-deoxy-D-manno-octulosonate from D-ribulose 5-phosphate: step 2/3. It participates in bacterial outer membrane biogenesis; lipopolysaccharide biosynthesis. The polypeptide is 2-dehydro-3-deoxyphosphooctonate aldolase (Chlamydia trachomatis serovar L2 (strain ATCC VR-902B / DSM 19102 / 434/Bu)).